Here is a 410-residue protein sequence, read N- to C-terminus: Arginine deiminase (410 aa).

The active-site Amidino-cysteine intermediate is the Cys-400.

This sequence belongs to the arginine deiminase family.

The protein resides in the cytoplasm. It catalyses the reaction L-arginine + H2O = L-citrulline + NH4(+). Its pathway is amino-acid degradation; L-arginine degradation via ADI pathway; carbamoyl phosphate from L-arginine: step 1/2. The sequence is that of Arginine deiminase from Lactococcus lactis subsp. cremoris (strain MG1363).